The primary structure comprises 322 residues: Agmatinase (322 aa).

6 residues coordinate Mn(2+): His136, Asp160, His162, Asp164, Asp243, and Asp245.

The protein belongs to the arginase family. Agmatinase subfamily. Mn(2+) is required as a cofactor.

It catalyses the reaction agmatine + H2O = urea + putrescine. It functions in the pathway amine and polyamine biosynthesis; putrescine biosynthesis via agmatine pathway; putrescine from agmatine: step 1/1. Functionally, catalyzes the formation of putrescine from agmatine. This is Agmatinase from Chromobacterium violaceum (strain ATCC 12472 / DSM 30191 / JCM 1249 / CCUG 213 / NBRC 12614 / NCIMB 9131 / NCTC 9757 / MK).